We begin with the raw amino-acid sequence, 117 residues long: Prefoldin subunit beta (117 aa).

It belongs to the prefoldin subunit beta family. Heterohexamer of two alpha and four beta subunits.

The protein localises to the cytoplasm. In terms of biological role, molecular chaperone capable of stabilizing a range of proteins. Seems to fulfill an ATP-independent, HSP70-like function in archaeal de novo protein folding. The chain is Prefoldin subunit beta (pfdB) from Methanosarcina acetivorans (strain ATCC 35395 / DSM 2834 / JCM 12185 / C2A).